The primary structure comprises 222 residues: Cytidylate kinase (222 aa).

Residue 10 to 18 (GTSSSGKSV) participates in ATP binding.

The protein belongs to the cytidylate kinase family. Type 1 subfamily.

The protein resides in the cytoplasm. It catalyses the reaction CMP + ATP = CDP + ADP. The enzyme catalyses dCMP + ATP = dCDP + ADP. This is Cytidylate kinase from Mycoplasma capricolum subsp. capricolum (strain California kid / ATCC 27343 / NCTC 10154).